The sequence spans 221 residues: 7-cyano-7-deazaguanine synthase (221 aa).

Residue 10-20 participates in ATP binding; the sequence is FSGGQDSTTCL. Zn(2+) contacts are provided by C187, C196, C199, and C202.

This sequence belongs to the QueC family. Homodimer. Requires Zn(2+) as cofactor.

The catalysed reaction is 7-carboxy-7-deazaguanine + NH4(+) + ATP = 7-cyano-7-deazaguanine + ADP + phosphate + H2O + H(+). It participates in purine metabolism; 7-cyano-7-deazaguanine biosynthesis. Its function is as follows. Catalyzes the ATP-dependent conversion of 7-carboxy-7-deazaguanine (CDG) to 7-cyano-7-deazaguanine (preQ(0)). The chain is 7-cyano-7-deazaguanine synthase from Shouchella clausii (strain KSM-K16) (Alkalihalobacillus clausii).